A 428-amino-acid chain; its full sequence is Aerobic C4-dicarboxylate transport protein (428 aa).

9 helical membrane-spanning segments follow: residues 5–27 (LFKS…GHYY), 47–64 (MIIA…IAGM), 77–99 (ALLY…VNVV), 141–163 (VIGA…FGFA), 184–206 (VIFG…AMAF), 216–238 (LVQL…VVVL), 289–311 (VVGL…YLTM), 326–348 (IFHQ…GVTG), and 353–375 (VLAA…ILGI).

Belongs to the dicarboxylate/amino acid:cation symporter (DAACS) (TC 2.A.23) family.

The protein resides in the cell inner membrane. In terms of biological role, responsible for the transport of dicarboxylates such as succinate, fumarate, and malate from the periplasm across the inner membrane. The polypeptide is Aerobic C4-dicarboxylate transport protein (dctA) (Salmonella typhimurium (strain LT2 / SGSC1412 / ATCC 700720)).